The sequence spans 138 residues: Small ribosomal subunit protein uS11c (138 aa).

Residues 1–23 (MAKTIPRIGSRKNGRIGSRKNTR) form a disordered region. Residues 9–23 (GSRKNGRIGSRKNTR) are compositionally biased toward basic residues.

This sequence belongs to the universal ribosomal protein uS11 family. In terms of assembly, part of the 30S ribosomal subunit.

It localises to the plastid. Its subcellular location is the chloroplast. This chain is Small ribosomal subunit protein uS11c, found in Daucus carota (Wild carrot).